Here is a 447-residue protein sequence, read N- to C-terminus: Ribosomal protein uS12 methylthiotransferase RimO (447 aa).

The region spanning proline 4–proline 114 is the MTTase N-terminal domain. [4Fe-4S] cluster-binding residues include cysteine 13, cysteine 49, cysteine 78, cysteine 147, cysteine 151, and cysteine 154. The region spanning leucine 133–alanine 370 is the Radical SAM core domain. Residues glutamine 373–lysine 443 enclose the TRAM domain.

The protein belongs to the methylthiotransferase family. RimO subfamily. It depends on [4Fe-4S] cluster as a cofactor.

Its subcellular location is the cytoplasm. It catalyses the reaction L-aspartate(89)-[ribosomal protein uS12]-hydrogen + (sulfur carrier)-SH + AH2 + 2 S-adenosyl-L-methionine = 3-methylsulfanyl-L-aspartate(89)-[ribosomal protein uS12]-hydrogen + (sulfur carrier)-H + 5'-deoxyadenosine + L-methionine + A + S-adenosyl-L-homocysteine + 2 H(+). In terms of biological role, catalyzes the methylthiolation of an aspartic acid residue of ribosomal protein uS12. In Acinetobacter baumannii (strain AB307-0294), this protein is Ribosomal protein uS12 methylthiotransferase RimO.